Consider the following 2066-residue polypeptide: Kinesin-like protein KIN-12C (2066 aa).

Disordered stretches follow at residues 1 to 41 (MSRN…SQIQ) and 59 to 116 (RAQH…RVSL). The span at 20-33 (SLSLFSPSRPPLNS) shows a compositional bias: low complexity. The span at 67 to 76 (GPEKKFEVLE) shows a compositional bias: basic and acidic residues. Over residues 99–109 (EPNSAQSTPTR) the composition is skewed to polar residues. The Kinesin motor domain occupies 168-505 (NVQVLIRLRP…LKFAQRAKLI (338 aa)). 249-256 (GQTGSGKT) lines the ATP pocket. 3 microtubules-binding regions span residues 375–379 (SSRSH), 406–412 (VDLAGSE), and 454–458 (HVPYR). Coiled-coil stretches lie at residues 1521 to 1618 (DLKT…VDEI) and 1650 to 1772 (KIYA…EILL). 2 disordered regions span residues 1803–1823 (SAAETISHKTEKSSTRSRGSS) and 2043–2066 (KYRKTSNNHPSTRTQGQSSGTRYR). Positions 1905-2051 (VQRVVEKAQQ…AKYRKTSNNH (147 aa)) form a coiled coil. The span at 2047 to 2066 (TSNNHPSTRTQGQSSGTRYR) shows a compositional bias: polar residues.

This sequence belongs to the TRAFAC class myosin-kinesin ATPase superfamily. Kinesin family. KIN-12 subfamily. As to quaternary structure, interacts with TAN. Interacts with RANGAP1. As to expression, expressed in tissues enriched in dividing cells, such as root meristems, root primordia, and leaf primordia/young leaves.

Its subcellular location is the cytoplasm. It localises to the cytoskeleton. The protein localises to the phragmoplast. Functionally, involved in the spatial control of cytokinesis by a proper phragmoplast guidance. Localizes TAN to the cortical division sites (CDS) during cytokinesis via direct binding. This Arabidopsis thaliana (Mouse-ear cress) protein is Kinesin-like protein KIN-12C.